Consider the following 86-residue polypeptide: MSIFPIALALLLIGLEEGEAARDGYPISKNNYCKIYCPNTKVCKETCKNRASAPDGECDGWNLCYCFKVPDNIPVWGDPGTPPCMT.

A signal peptide spans 1-20; the sequence is MSIFPIALALLLIGLEEGEA. One can recognise an LCN-type CS-alpha/beta domain in the interval 22-85; it reads RDGYPISKNN…WGDPGTPPCM (64 aa). 4 disulfide bridges follow: cysteine 33/cysteine 84, cysteine 37/cysteine 58, cysteine 43/cysteine 64, and cysteine 47/cysteine 66.

It belongs to the long (4 C-C) scorpion toxin superfamily. Sodium channel inhibitor family. Beta subfamily. As to expression, expressed by the venom gland.

Its subcellular location is the secreted. Beta toxins bind voltage-independently at site-4 of sodium channels (Nav) and shift the voltage of activation toward more negative potentials thereby affecting sodium channel activation and promoting spontaneous and repetitive firing. This chain is Toxin Tpa5, found in Tityus pachyurus (Colombian scorpion).